The primary structure comprises 64 residues: Micrurotoxin 1 (64 aa).

Cystine bridges form between C3/C24, C6/C11, C17/C41, C45/C57, and C58/C63.

It belongs to the three-finger toxin family. Ancestral subfamily. As to expression, expressed by the venom gland.

The protein resides in the secreted. Functionally, allosteric modulator of the GABA(A) receptor (GABR), possibly increasing receptor affinity for the agonist, thus enhancing receptor opening and macroscopic desensitization. In vivo, intracerebroventricular injection into mice results in periods of reduced basal activity, followed by bursts of intense seizures and death. This Micrurus mipartitus (Red-tailed coral snake) protein is Micrurotoxin 1.